Consider the following 90-residue polypeptide: Putative beta-neurotoxin RjAa2f (90 aa).

Positions 1–18 are cleaved as a signal peptide; that stretch reads MKILIFIIASFMLIGVEC. Residues 19–89 enclose the LCN-type CS-alpha/beta domain; it reads KEGYPMGSDG…VWDSKTNKCG (71 aa). 4 disulfides stabilise this stretch: Cys-29–Cys-88, Cys-33–Cys-62, Cys-40–Cys-69, and Cys-44–Cys-71.

The protein belongs to the long (4 C-C) scorpion toxin superfamily. Sodium channel inhibitor family. Beta subfamily. In terms of tissue distribution, expressed by the venom gland.

It is found in the secreted. In terms of biological role, beta toxins bind voltage-independently at site-4 of sodium channels (Nav) and shift the voltage of activation toward more negative potentials thereby affecting sodium channel activation and promoting spontaneous and repetitive firing. The protein is Putative beta-neurotoxin RjAa2f of Rhopalurus junceus (Caribbean blue scorpion).